We begin with the raw amino-acid sequence, 387 residues long: Alkanesulfonate monooxygenase (387 aa).

Belongs to the SsuD family.

It catalyses the reaction an alkanesulfonate + FMNH2 + O2 = an aldehyde + FMN + sulfite + H2O + 2 H(+). Functionally, catalyzes the desulfonation of aliphatic sulfonates. The chain is Alkanesulfonate monooxygenase from Ralstonia pickettii (strain 12J).